The sequence spans 499 residues: Glycerol kinase (499 aa).

T15 is a binding site for ADP. T15, T16, and S17 together coordinate ATP. T15 lines the sn-glycerol 3-phosphate pocket. ADP is bound at residue R19. Sn-glycerol 3-phosphate contacts are provided by R85, E86, Y137, and D246. Positions 85, 86, 137, 246, and 247 each coordinate glycerol. ADP-binding residues include T268 and G311. Residues T268, G311, Q315, and G412 each coordinate ATP. Residues G412 and N416 each contribute to the ADP site.

Belongs to the FGGY kinase family.

It catalyses the reaction glycerol + ATP = sn-glycerol 3-phosphate + ADP + H(+). It functions in the pathway polyol metabolism; glycerol degradation via glycerol kinase pathway; sn-glycerol 3-phosphate from glycerol: step 1/1. Its activity is regulated as follows. Inhibited by fructose 1,6-bisphosphate (FBP). Its function is as follows. Key enzyme in the regulation of glycerol uptake and metabolism. Catalyzes the phosphorylation of glycerol to yield sn-glycerol 3-phosphate. The chain is Glycerol kinase from Parabacteroides distasonis (strain ATCC 8503 / DSM 20701 / CIP 104284 / JCM 5825 / NCTC 11152).